The chain runs to 159 residues: ATP synthase subunit b 2 (159 aa).

Residues 1–21 traverse the membrane as a helical segment; it reads MDATFWALVALIIFVGILLYM.

Belongs to the ATPase B chain family. As to quaternary structure, F-type ATPases have 2 components, F(1) - the catalytic core - and F(0) - the membrane proton channel. F(1) has five subunits: alpha(3), beta(3), gamma(1), delta(1), epsilon(1). F(0) has three main subunits: a(1), b(2) and c(10-14). The alpha and beta chains form an alternating ring which encloses part of the gamma chain. F(1) is attached to F(0) by a central stalk formed by the gamma and epsilon chains, while a peripheral stalk is formed by the delta and b chains.

The protein resides in the cell inner membrane. Functionally, f(1)F(0) ATP synthase produces ATP from ADP in the presence of a proton or sodium gradient. F-type ATPases consist of two structural domains, F(1) containing the extramembraneous catalytic core and F(0) containing the membrane proton channel, linked together by a central stalk and a peripheral stalk. During catalysis, ATP synthesis in the catalytic domain of F(1) is coupled via a rotary mechanism of the central stalk subunits to proton translocation. Component of the F(0) channel, it forms part of the peripheral stalk, linking F(1) to F(0). This chain is ATP synthase subunit b 2, found in Chelativorans sp. (strain BNC1).